We begin with the raw amino-acid sequence, 142 residues long: Hemoglobin subunit zeta (142 aa).

Residue Ser-2 is modified to N-acetylserine. The 141-residue stretch at 2-142 (SLTRTERTII…VSGVLTEKYR (141 aa)) folds into the Globin domain. Thr-29 carries the phosphothreonine modification. Position 53 is a phosphoserine (Ser-53). Residue His-59 participates in heme b binding. A phosphoserine mark is found at Ser-73 and Ser-82. Residue His-88 coordinates heme b.

Belongs to the globin family. Heterotetramer of two zeta chains and beta-type chains.

Functionally, the zeta chain is an alpha-type chain of mammalian embryonic hemoglobin. In Capra hircus (Goat), this protein is Hemoglobin subunit zeta (HBZ1).